We begin with the raw amino-acid sequence, 189 residues long: Interferon alpha-4 (189 aa).

A signal peptide spans 1 to 23; that stretch reads MALSFSLLMAVLVLSYKSICSLG. 2 disulfides stabilise this stretch: cysteine 24–cysteine 122 and cysteine 52–cysteine 162.

The protein belongs to the alpha/beta interferon family.

The protein localises to the secreted. Produced by macrophages, IFN-alpha have antiviral activities. Interferon stimulates the production of two enzymes: a protein kinase and an oligoadenylate synthetase. The chain is Interferon alpha-4 (IFNA4) from Homo sapiens (Human).